The following is a 672-amino-acid chain: Nuclear RNA export factor 1 (672 aa).

2 disordered regions span residues 1–52 (MPKR…SFKP) and 73–101 (DEDD…IPRG). A compositionally biased stretch (basic residues) spans 40-49 (RKDRNKRRVS). The RRM domain maps to 113–193 (WYQVTLQNAQ…PRVRSGIPLV (81 aa)). LRR repeat units lie at residues 255 to 280 (DLEA…KRLP), 281 to 304 (NLKI…LRNL), 305 to 332 (SILE…EVRR), and 333 to 360 (KFPK…GRLL). Positions 375–529 (VVRQFLDQYF…FCIRNETIFI (155 aa)) constitute an NTF2 domain. Positions 541 to 564 (KRSQHQPAPGAMPSTSSAVTSPQA) are disordered. The segment covering 553–563 (PSTSSAVTSPQ) has biased composition (polar residues). A Phosphoserine modification is found at S561. The TAP-C domain maps to 618-672 (STKMQMIEAMSAQSQMNVIWSRKCLEETNWDFNHAAFVFEKLFKENKIPPEAFMK).

The protein belongs to the NXF family. As to quaternary structure, interacts with Nxt1. Interacts with ZC3H3. Forms a complex with Nup358/RanBP2, RanGAP and Nxt1. Interacts with Nup54 and Nup58. Interacts with Orc3 and Hpr1. As to expression, expressed ubiquitously.

The protein resides in the nucleus. The protein localises to the nucleoplasm. It is found in the cytoplasm. It localises to the nucleus envelope. Mediates the export of the majority of mRNAs from the nucleus to the cytoplasm. In ovarian follicle cells, plays a role in transposable element silencing regulation by enabling the nuclear export of flamenco (flam) transcripts and subsequent piRNA biogenesis. This Drosophila melanogaster (Fruit fly) protein is Nuclear RNA export factor 1.